Here is a 258-residue protein sequence, read N- to C-terminus: Small ribosomal subunit protein uS2 (258 aa).

The segment at 226–258 is disordered; that stretch reads AQNKDVEPVADKDEKPEAAPVDEAETATETTGE. Positions 229 to 242 are enriched in basic and acidic residues; it reads KDVEPVADKDEKPE. The segment covering 245–258 has biased composition (acidic residues); it reads PVDEAETATETTGE.

It belongs to the universal ribosomal protein uS2 family.

This chain is Small ribosomal subunit protein uS2, found in Solidesulfovibrio magneticus (strain ATCC 700980 / DSM 13731 / RS-1) (Desulfovibrio magneticus).